The primary structure comprises 445 residues: D-serine transporter DsdX (445 aa).

Helical transmembrane passes span I5–F25, P29–L49, S57–G77, V106–I126, L140–P160, V178–L198, T224–V244, I265–I285, F302–L322, I343–A363, I385–F405, and T425–I445.

It belongs to the GntP permease family.

The protein localises to the cell inner membrane. Its activity is regulated as follows. Uptake of D-serine is inhibited by carbonyl cyanide m-chlorophenylhydrazone (CCCP), and at high concentrations of D-threonine, stimulated by D-cycloserine and not affected by D-alanine or glycine. In terms of biological role, protein that allows transport of D-serine across the inner membrane, does not transport D-alanine nor probably glycine. Is probably a H(+) symporter, as CCCP inhibits transport. Transports D-serine more efficiently than CycA. This Escherichia coli O6:H1 (strain CFT073 / ATCC 700928 / UPEC) protein is D-serine transporter DsdX (dsdX).